Consider the following 121-residue polypeptide: MCQNLGKFEIVVSHYRRVKAMNVIVDLCVVPLGVGVSVGQYVAACQKVLAEAGLKHTMHAYGTNIEGDWDEVFAAVKACHEAVHALGAPRITSSMRFGTRTDRPQTMDEKVKSVETWLENS.

This sequence belongs to the UPF0045 family.

This Synechocystis sp. (strain ATCC 27184 / PCC 6803 / Kazusa) protein is UPF0045 protein sll0230.